A 424-amino-acid chain; its full sequence is E3 ubiquitin-protein ligase RNF26 (424 aa).

A run of 5 helical transmembrane segments spans residues 24 to 44 (LNFLLVSSLLATLAWLLAFIY), 60 to 80 (GFLLSLLALVEAVVRFTFGGL), 157 to 177 (ISTQNFFSLVLALWDAVTGPL), 183 to 203 (VVAAFLAHISSSAVAMAILLW), and 224 to 244 (VVFHLTGLVLLACVLAVILIV). The RING-type zinc finger occupies 371-413 (CVICQDQSKTVLLLPCRHLCLCQACTEILMRHPVYHRNCPLCR).

As to quaternary structure, interacts with INCA1. Interacts with TMEM43, ENDOD1, TMEM33 and TMED1 to form a complex capable of modulating innate immune signaling through the cGAS-STING pathway. Interacts with UBE2J1; this interaction is important for SQSTM1 ubiquitination.

It localises to the endoplasmic reticulum membrane. It carries out the reaction S-ubiquitinyl-[E2 ubiquitin-conjugating enzyme]-L-cysteine + [acceptor protein]-L-lysine = [E2 ubiquitin-conjugating enzyme]-L-cysteine + N(6)-ubiquitinyl-[acceptor protein]-L-lysine.. It participates in protein modification; protein ubiquitination. E3 ubiquitin-protein ligase that plays a key role in endosome organization by retaining vesicles in the perinuclear cloud. Acts as a platform for perinuclear positioning of the endosomal system by mediating ubiquitination of SQSTM1 through interaction with the ubiquitin conjugating enzyme UBE2J1. Ubiquitinated SQSTM1 attracts specific vesicle-associated adapters, forming a molecular bridge that restrains cognate vesicles in the perinuclear region and organizes the endosomal pathway for efficient cargo transport. Also acts as a regulator of type I interferon production in response to viral infection by mediating the formation of 'Lys-11'-linked polyubiquitin chains on TMEM173/STING, leading to stabilize TMEM173/STING. Also required to limit type I interferon response by promoting autophagic degradation of IRF3. In Mus musculus (Mouse), this protein is E3 ubiquitin-protein ligase RNF26.